The chain runs to 242 residues: Zinc import ATP-binding protein ZnuC (242 aa).

The ABC transporter domain maps to 24-241 (INVENLSFFY…EKFLKMFSSY (218 aa)). 56–63 (GPNGGGKT) lines the ATP pocket.

The protein belongs to the ABC transporter superfamily. Zinc importer (TC 3.A.1.15.5) family. As to quaternary structure, the complex is composed of two ATP-binding proteins (ZnuC), two transmembrane proteins (ZnuB) and a solute-binding protein (ZnuA).

The protein localises to the cell inner membrane. It carries out the reaction Zn(2+)(out) + ATP(in) + H2O(in) = Zn(2+)(in) + ADP(in) + phosphate(in) + H(+)(in). Part of the ABC transporter complex ZnuABC involved in zinc import. Responsible for energy coupling to the transport system. In Ehrlichia chaffeensis (strain ATCC CRL-10679 / Arkansas), this protein is Zinc import ATP-binding protein ZnuC.